Here is a 205-residue protein sequence, read N- to C-terminus: Guanylate kinase (205 aa).

The region spanning 6–184 is the Guanylate kinase-like domain; the sequence is GLLLVVSGPS…SAKEIEGIIS (179 aa). An ATP-binding site is contributed by 13 to 20; it reads GPSGAGKG.

This sequence belongs to the guanylate kinase family.

It is found in the cytoplasm. It carries out the reaction GMP + ATP = GDP + ADP. Functionally, essential for recycling GMP and indirectly, cGMP. The sequence is that of Guanylate kinase from Clostridioides difficile (strain 630) (Peptoclostridium difficile).